Reading from the N-terminus, the 507-residue chain is Phytoene dehydrogenase (507 aa).

Residue 12–45 participates in FAD binding; the sequence is VVVGAGLAGLAAALHLLGAGRRVTVVEREDVPGG.

It belongs to the carotenoid/retinoid oxidoreductase family. It depends on FAD as a cofactor.

It participates in carotenoid biosynthesis; lycopene biosynthesis. In terms of biological role, this enzyme converts phytoene into zeta-carotene via the intermediary of phytofluene by the symmetrical introduction of two double bonds at the C-11 and C-11' positions of phytoene. The sequence is that of Phytoene dehydrogenase (crtI) from Streptomyces griseus.